Reading from the N-terminus, the 915-residue chain is Mitogen-activated protein kinase kinae kinase MST11 (915 aa).

Disordered stretches follow at residues 1–65 (MAML…PKHW), 134–171 (KKRN…NPSV), and 183–249 (GMAY…TRTD). Positions 26-45 (AQASYPPSRRAPAVPPASQS) are enriched in low complexity. In terms of domain architecture, SAM spans 65 to 128 (WDEDKVCEYL…FLSIKKLRTK (64 aa)). 2 stretches are compositionally biased toward low complexity: residues 152–163 (SESPSKPFHSSS) and 188–203 (PSRP…PLPS). A Ras-associating domain is found at 263–353 (NQDVIRVIST…NRLILRRVPA (91 aa)). The 271-residue stretch at 641-911 (WMKGALIGQG…ADDLMLSPFL (271 aa)) folds into the Protein kinase domain. ATP-binding positions include 647 to 655 (IGQGSFGCV) and Lys-670.

This sequence belongs to the protein kinase superfamily. STE Ser/Thr protein kinase family. MAP kinase kinase kinase subfamily. As to quaternary structure, interacts with the adapter protein MST50.

It carries out the reaction L-seryl-[protein] + ATP = O-phospho-L-seryl-[protein] + ADP + H(+). The catalysed reaction is L-threonyl-[protein] + ATP = O-phospho-L-threonyl-[protein] + ADP + H(+). Its function is as follows. Mitogen-activated protein kinase kinase kinase; part of the MST11-MST7-PMK1 MAP kinase (MAPK) cascade that is essential for appressorium formation, penetration and invasive growth. The MST11-MST7-PMK1 MAP kinase cascade transduces signals from the cell surface sensors MDB2 and SHO1 that recognize various surface signals such as surface hydrophobicity, cutin monomers, and rice leaf waxes. MST11 acts as the upstream MAPKKK that directly phosphorylates MAPKK MST7. MST11 but not MST7 may also be involved in the OSM1 MAPK pathway in response to osmotic stresses. In Pyricularia oryzae (strain 70-15 / ATCC MYA-4617 / FGSC 8958) (Rice blast fungus), this protein is Mitogen-activated protein kinase kinae kinase MST11.